The sequence spans 765 residues: Transient receptor potential cation channel subfamily V member 6 (765 aa).

The Cytoplasmic portion of the chain corresponds to 1–367; sequence MGPLQGDGGP…SLKWKRYGRP (367 aa). ANK repeat units follow at residues 84 to 114, 118 to 147, and 156 to 185; these read IWES…KVHQ, MGET…ELVF, and EGQT…SVSA. The segment at 133-143 is interaction with calmodulin; the sequence is EAAMVLMEAAP. Y201 is modified (phosphotyrosine; by SRC). 3 ANK repeats span residues 202-231, 235-277, and 279-308; these read FGEH…DIRA, LGNT…LVPN, and QGLT…HTQW. The helical transmembrane segment at 368 to 388 threads the bilayer; that stretch reads YFCMLGAIYLLYIICFTMCCI. At 389 to 425 the chain is on the extracellular side; the sequence is YRPLKPRTNNRTSPRDNTLLQQKLLQEAYMTPKDDIR. An N-linked (GlcNAc...) asparagine glycan is attached at N398. The chain crosses the membrane as a helical span at residues 426–448; it reads LVGELVTVIGAIIILLVEVPDIF. Over 449-463 the chain is Cytoplasmic; sequence RMGVTRFFGQTILGG. The chain crosses the membrane as a helical span at residues 464–483; it reads PFHVLIITYAFMVLVTMVMR. Residues 484 to 489 lie on the Extracellular side of the membrane; that stretch reads LISASG. A helical membrane pass occupies residues 490-509; sequence EVVPMSFALVLGWCNVMYFA. At 510-529 the chain is on the cytoplasmic side; it reads RGFQMLGPFTIMIQKMIFGD. The helical transmembrane segment at 530–552 threads the bilayer; it reads LMRFCWLMAVVILGFASAFYIIF. Over 553 to 565 the chain is Extracellular; it reads QTEDPEELGHFYD. Positions 566–585 form an intramembrane region, pore-forming; it reads YPMALFSTFELFLTIIDGPA. The Selectivity filter signature appears at 581 to 585; sequence IDGPA. D582 contacts Ca(2+). The Extracellular segment spans residues 586–596; sequence NYNVDLPFMYS. Residues 597-617 traverse the membrane as a helical segment; it reads ITYAAFAIIATLLMLNLLIAM. The Cytoplasmic segment spans residues 618 to 765; it reads MGDTHWRVAH…EDGESWEYQI (148 aa). Positions 638–642 are interaction with S100A10; the sequence is VATTV. Residues 731–751 are interaction with calmodulin; that stretch reads SSANWERLRQGTLRRDLRGII. At T742 the chain carries Phosphothreonine; by PKC/PRKCA.

It belongs to the transient receptor (TC 1.A.4) family. TrpV subfamily. TRPV6 sub-subfamily. In terms of assembly, homotetramer. Probably also forms heterotetramers with TRPV5. Interacts with TRPV5. Interacts with S100A10 and probably with the ANAX2-S100A10 heterotetramer. The interaction with S100A10 is required for the trafficking to the plasma membrane. Interacts with BSPRY. Interacts with TCAF1 and TCAF2 isoform 2. Interacts with calmodulin. Glycosylated. In terms of processing, phosphorylation at Tyr-201 by SRC leads to an increased calcium influx through the channel. Probably dephosphorylated at this site by PTPN1. Phosphorylation by PRKCA at the calmodulin binding site delays channel inactivation. Expressed at high levels in the gastrointestinal tract, including esophagus, stomach, duodenum, jejunum, ileum and colon, and in pancreas, placenta, prostate and salivary gland. Expressed at moderate levels in liver, kidney and testis. Expressed in trophoblasts of placenta villus trees (at protein level). Expressed in locally advanced prostate cancer, metastatic and androgen-insensitive prostatic lesions but not detected in healthy prostate tissue and benign prostatic hyperplasia.

It is found in the cell membrane. The enzyme catalyses Ca(2+)(in) = Ca(2+)(out). Functionally, calcium selective cation channel that mediates Ca(2+) uptake in various tissues, including the intestine. Important for normal Ca(2+) ion homeostasis in the body, including bone and skin. The channel is activated by low internal calcium level, probably including intracellular calcium store depletion, and the current exhibits an inward rectification. Inactivation includes both a rapid Ca(2+)-dependent and a slower Ca(2+)-calmodulin-dependent mechanism; the latter may be regulated by phosphorylation. In vitro, is slowly inhibited by Mg(2+) in a voltage-independent manner. Heteromeric assembly with TRPV5 seems to modify channel properties. TRPV5-TRPV6 heteromultimeric concatemers exhibit voltage-dependent gating. The chain is Transient receptor potential cation channel subfamily V member 6 (TRPV6) from Homo sapiens (Human).